A 293-amino-acid chain; its full sequence is Pyridoxal 5'-phosphate synthase subunit PdxS (293 aa).

Asp-23 provides a ligand contact to D-ribose 5-phosphate. Catalysis depends on Lys-80, which acts as the Schiff-base intermediate with D-ribose 5-phosphate. D-ribose 5-phosphate is bound at residue Gly-152. Arg-164 contacts D-glyceraldehyde 3-phosphate. Residues Gly-213 and Gly-234–Ser-235 contribute to the D-ribose 5-phosphate site.

The protein belongs to the PdxS/SNZ family. In terms of assembly, in the presence of PdxT, forms a dodecamer of heterodimers.

It carries out the reaction aldehydo-D-ribose 5-phosphate + D-glyceraldehyde 3-phosphate + L-glutamine = pyridoxal 5'-phosphate + L-glutamate + phosphate + 3 H2O + H(+). The protein operates within cofactor biosynthesis; pyridoxal 5'-phosphate biosynthesis. Catalyzes the formation of pyridoxal 5'-phosphate from ribose 5-phosphate (RBP), glyceraldehyde 3-phosphate (G3P) and ammonia. The ammonia is provided by the PdxT subunit. Can also use ribulose 5-phosphate and dihydroxyacetone phosphate as substrates, resulting from enzyme-catalyzed isomerization of RBP and G3P, respectively. This Syntrophus aciditrophicus (strain SB) protein is Pyridoxal 5'-phosphate synthase subunit PdxS.